Reading from the N-terminus, the 34-residue chain is Photosystem I reaction center subunit XII (34 aa).

A helical transmembrane segment spans residues Val11–Ala31.

This sequence belongs to the PsaM family. In terms of assembly, the G.violaceus PSI reaction center is composed of one copy each of PsaA,B,C,D,E,F,L,M and Z, and forms trimeric complexes.

The protein localises to the cell inner membrane. In Gloeobacter violaceus (strain ATCC 29082 / PCC 7421), this protein is Photosystem I reaction center subunit XII.